A 244-amino-acid polypeptide reads, in one-letter code: Flagellar brake protein YcgR (244 aa).

Residues 112-230 (QRRRYFRISA…ERQLQRIIFS (119 aa)) form the PilZ domain.

This sequence belongs to the YcgR family. As to quaternary structure, monomer. Interacts with MotA in the flagellar basal bodies. In another study it was not seen to interact with MotA, but instead with FliM and FliG, also in the flagellar basal body.

It localises to the bacterial flagellum basal body. Acts as a flagellar brake, regulating swimming and swarming in a bis-(3'-5') cyclic diguanylic acid (c-di-GMP)-dependent manner. When bound to c-di-GMP it binds to elements of the flagellar motor (MotA and/or FliG and FliM, binding to FliM also occurs in the absence of c-di-GMP), causing the motor to slow down. Thus, increasing levels of c-di-GMP lead to decreased motility. Probably binds 1 c-di-GMP dimer per subunit. The polypeptide is Flagellar brake protein YcgR (ycgR) (Escherichia coli (strain K12)).